The sequence spans 160 residues: 2-C-methyl-D-erythritol 2,4-cyclodiphosphate synthase (160 aa).

A divalent metal cation contacts are provided by aspartate 11 and histidine 13. Residues 11-13 and 37-38 contribute to the 4-CDP-2-C-methyl-D-erythritol 2-phosphate site; these read DVH and HS. Residue histidine 45 coordinates a divalent metal cation. 4-CDP-2-C-methyl-D-erythritol 2-phosphate contacts are provided by residues 59 to 61, 64 to 68, 103 to 109, 135 to 138, phenylalanine 142, and arginine 145; these read DIG, FPDTD, AQAPKMA, and TTTE.

Belongs to the IspF family. Homotrimer. A divalent metal cation is required as a cofactor.

The catalysed reaction is 4-CDP-2-C-methyl-D-erythritol 2-phosphate = 2-C-methyl-D-erythritol 2,4-cyclic diphosphate + CMP. Its pathway is isoprenoid biosynthesis; isopentenyl diphosphate biosynthesis via DXP pathway; isopentenyl diphosphate from 1-deoxy-D-xylulose 5-phosphate: step 4/6. In terms of biological role, involved in the biosynthesis of isopentenyl diphosphate (IPP) and dimethylallyl diphosphate (DMAPP), two major building blocks of isoprenoid compounds. Catalyzes the conversion of 4-diphosphocytidyl-2-C-methyl-D-erythritol 2-phosphate (CDP-ME2P) to 2-C-methyl-D-erythritol 2,4-cyclodiphosphate (ME-CPP) with a corresponding release of cytidine 5-monophosphate (CMP). The chain is 2-C-methyl-D-erythritol 2,4-cyclodiphosphate synthase from Thioalkalivibrio sulfidiphilus (strain HL-EbGR7).